We begin with the raw amino-acid sequence, 335 residues long: tRNA methyltransferase 10 homolog A (335 aa).

Disordered regions lie at residues 1–91 and 279–335; these read MSSE…DRKR and VPAH…PDPQ. Ser-22 and Ser-24 each carry phosphoserine. Residues 52–62 are compositionally biased toward basic and acidic residues; it reads RLWEEQREQRK. Positions 52–84 form a coiled coil; sequence RLWEEQREQRKEKRKEKRKRKKLERRCQLESNS. The segment covering 63-75 has biased composition (basic residues); that stretch reads EKRKEKRKRKKLE. The SAM-dependent MTase TRM10-type domain maps to 88–279; the sequence is DRKRIRRHVA…TILPPRKGAV (192 aa). Basic and acidic residues predominate over residues 304-319; it reads EGEHGRDDPGSPHKEQ. A compositionally biased stretch (low complexity) spans 320-335; that stretch reads QGQQSSSVSAVSPDPQ. Residue Ser-331 is modified to Phosphoserine.

The protein belongs to the class IV-like SAM-binding methyltransferase superfamily. TRM10 family. Interacts with tRNA. Ubiquitously expressed. Is more abundant in brain and pancreatic islets compared to other tissues (at protein level).

The protein localises to the nucleus. It localises to the nucleolus. It carries out the reaction guanosine(9) in tRNA + S-adenosyl-L-methionine = N(1)-methylguanosine(9) in tRNA + S-adenosyl-L-homocysteine + H(+). In terms of biological role, S-adenosyl-L-methionine-dependent guanine N(1)-methyltransferase that catalyzes the formation of N(1)-methylguanine at position 9 (m1G9) in tRNAs. Probably not able to catalyze formation of N(1)-methyladenine at position 9 (m1A9) in tRNAs. In Rattus norvegicus (Rat), this protein is tRNA methyltransferase 10 homolog A (Trmt10a).